We begin with the raw amino-acid sequence, 429 residues long: Glutamate-1-semialdehyde 2,1-aminomutase (429 aa).

Lys267 carries the post-translational modification N6-(pyridoxal phosphate)lysine.

Belongs to the class-III pyridoxal-phosphate-dependent aminotransferase family. HemL subfamily. In terms of assembly, homodimer. Pyridoxal 5'-phosphate serves as cofactor.

The protein resides in the cytoplasm. It catalyses the reaction (S)-4-amino-5-oxopentanoate = 5-aminolevulinate. It functions in the pathway porphyrin-containing compound metabolism; protoporphyrin-IX biosynthesis; 5-aminolevulinate from L-glutamyl-tRNA(Glu): step 2/2. This Anaeromyxobacter sp. (strain Fw109-5) protein is Glutamate-1-semialdehyde 2,1-aminomutase.